Reading from the N-terminus, the 231-residue chain is Acyl-protein thioesterase 2 (231 aa).

The S-palmitoyl cysteine moiety is linked to residue Cys2. The residue at position 82 (Ser82) is a Phosphoserine. Catalysis depends on charge relay system residues Ser122, Asp176, and His210.

The protein belongs to the AB hydrolase superfamily. AB hydrolase 2 family.

The protein localises to the cytoplasm. The catalysed reaction is S-hexadecanoyl-L-cysteinyl-[protein] + H2O = L-cysteinyl-[protein] + hexadecanoate + H(+). The enzyme catalyses prostaglandin E2 1-glyceryl ester + H2O = prostaglandin E2 + glycerol + H(+). It carries out the reaction 1-hexadecanoyl-sn-glycero-3-phosphocholine + H2O = sn-glycerol 3-phosphocholine + hexadecanoate + H(+). It catalyses the reaction 1-octadecanoyl-sn-glycero-3-phosphocholine + H2O = octadecanoate + sn-glycerol 3-phosphocholine + H(+). The catalysed reaction is 1-hexadecanoyl-sn-glycero-3-phosphate + H2O = sn-glycerol 3-phosphate + hexadecanoate + H(+). The enzyme catalyses 1-hexadecanoyl-sn-glycero-3-phospho-L-serine + H2O = sn-glycero-3-phospho-L-serine + hexadecanoate + H(+). Its function is as follows. Acts as an acyl-protein thioesterase hydrolyzing fatty acids from S-acylated cysteine residues in proteins such as trimeric G alpha proteins, GSDMD, GAP43, ZDHHC6 or HRAS. Deacylates GAP43. Mediates depalmitoylation of ZDHHC6. Has lysophospholipase activity. Hydrolyzes prostaglandin glycerol esters (PG-Gs) in the following order prostaglandin D2-glycerol ester (PGD2-G) &gt; prostaglandin E2 glycerol ester (PGE2-G) &gt; prostaglandin F2-alpha-glycerol ester (PGF2-alpha-G). Hydrolyzes 1-arachidonoylglycerol but not 2-arachidonoylglycerol or arachidonoylethanolamide. The chain is Acyl-protein thioesterase 2 (Lypla2) from Rattus norvegicus (Rat).